The sequence spans 833 residues: Serine/threonine-protein phosphatase 4 regulatory subunit 3A (833 aa).

The WH1 domain maps to 1–100 (MTDTRRRVKV…DEIWEKICQV (100 aa)). Serine 117 and serine 127 each carry phosphoserine. N6-acetyllysine is present on lysine 655. Over residues 683–694 (FNTDEDDMEDGE) the composition is skewed to acidic residues. 2 disordered regions span residues 683–712 (FNTD…IMDP) and 733–833 (KTNL…KFDS). 7 positions are modified to phosphoserine: serine 698, serine 741, serine 768, serine 771, serine 774, serine 777, and serine 780. Positions 734–751 (TNLSGRQSPSFKLSLSSG) are enriched in polar residues. Residues 752–768 (TKTNLTSQSSTTNLPGS) are compositionally biased toward low complexity. The segment covering 785 to 794 (PKNTSQTAAI) has biased composition (polar residues). Acidic residues predominate over residues 806–820 (YPDDDEDDDEDEDKE).

It belongs to the SMEK family. Serine/threonine-protein phosphatase 4 (PP4) occurs in different assemblies of the catalytic and one or more regulatory subunits. Component of the PP4 complex PPP4C-PPP4R2-PPP4R3A. Interacts with PPP4C; the interaction requires PPP4R2.

Its subcellular location is the cytoplasm. The protein resides in the cytoskeleton. It is found in the microtubule organizing center. The protein localises to the centrosome. It localises to the nucleus. Its function is as follows. Regulatory subunit of serine/threonine-protein phosphatase 4. May regulate the activity of PPP4C at centrosomal microtubule organizing centers. The PPP4C-PPP4R2-PPP4R3A PP4 complex specifically dephosphorylates H2AX phosphorylated on 'Ser-140' (gamma-H2AX) generated during DNA replication and required for DNA DSB repair. In Homo sapiens (Human), this protein is Serine/threonine-protein phosphatase 4 regulatory subunit 3A.